Consider the following 1657-residue polypeptide: Thrombospondin type-1 domain-containing protein 7A (1657 aa).

Residues 1–47 form the signal peptide; sequence MGLQARRWASGSRGAAGPRRGVLQLLPLPLPLPLLLLLLLRPGAGRA. Residues 48-1607 are Extracellular-facing; sequence AAQGEAEAPT…FGPDGRLKTW (1560 aa). 3 TSP type-1 domains span residues 57-116, 120-192, and 194-247; these read TLYL…KVCD, ELYD…IPCQ, and DCIV…SPCE. A glycan (N-linked (GlcNAc...) asparagine) is linked at Asn234. Positions 265–311 are disordered; the sequence is MPHSRQVRQARRRGKNKEREKDRSKGVKDPEARELIKKKRNRNRQNR. Residues 267-315 adopt a coiled-coil conformation; it reads HSRQVRQARRRGKNKEREKDRSKGVKDPEARELIKKKRNRNRQNRQENK. The segment covering 269–280 has biased composition (basic residues); sequence RQVRQARRRGKN. Basic and acidic residues predominate over residues 281–299; it reads KEREKDRSKGVKDPEAREL. Basic residues predominate over residues 300–309; that stretch reads IKKKRNRNRQ. The N-linked (GlcNAc...) asparagine glycan is linked to Asn332. TSP type-1 domains are found at residues 360–416, 423–510, 512–574, 634–695, 696–769, 771–831, 832–904, 906–959, 960–1033, 1035–1095, 1096–1163, 1166–1220, 1221–1284, 1286–1341, 1342–1412, and 1414–1475; these read ECQV…LSQG, ATYG…IPCP, ECEV…PACY, DCVL…HPCT, VYHW…LPCK, DCIV…QACQ, SYRW…IPCQ, DCQL…CPCD, KYNA…IPCP, DCKL…SDCN, QYLW…LPCP, CVIS…KNCY, HYDY…VECP, NCQL…KPCY, RWQY…QPCP, and DCYL…GQCY. 3 cysteine pairs are disulfide-bonded: Cys435–Cys505, Cys455–Cys509, and Cys466–Cys494. Asn450 carries an N-linked (GlcNAc...) asparagine glycan. An N-linked (GlcNAc...) asparagine glycan is attached at Asn500. 2 cysteine pairs are disulfide-bonded: Cys635-Cys677 and Cys646-Cys650. The N-linked (GlcNAc...) asparagine glycan is linked to Asn679. Cystine bridges form between Cys689–Cys694, Cys707–Cys764, Cys728–Cys768, Cys739–Cys752, Cys772–Cys814, Cys783–Cys787, and Cys824–Cys830. N-linked (GlcNAc...) asparagine glycosylation occurs at Asn717. N-linked (GlcNAc...) asparagine glycosylation is present at Asn968. Disulfide bonds link Cys972-Cys1028, Cys994-Cys1032, Cys1005-Cys1018, Cys1036-Cys1073, Cys1047-Cys1051, and Cys1090-Cys1094. The N-linked (GlcNAc...) asparagine glycan is linked to Asn1043. N-linked (GlcNAc...) asparagine glycosylation occurs at Asn1182. Cys1213 and Cys1219 are oxidised to a cystine. Asn1225 is a glycosylation site (N-linked (GlcNAc...) asparagine). Cystine bridges form between Cys1232–Cys1279, Cys1240–Cys1283, Cys1251–Cys1264, Cys1287–Cys1325, Cys1298–Cys1302, Cys1335–Cys1340, Cys1351–Cys1407, Cys1358–Cys1411, Cys1369–Cys1388, Cys1415–Cys1459, Cys1426–Cys1430, and Cys1469–Cys1474. Asn1276 is a glycosylation site (N-linked (GlcNAc...) asparagine). N-linked (GlcNAc...) asparagine glycosylation is present at Asn1366. Asn1500 and Asn1547 each carry an N-linked (GlcNAc...) asparagine glycan. The tract at residues 1570–1591 is disordered; the sequence is DVKTSRAVHPTQPSSNPAGRGR. A helical membrane pass occupies residues 1608 to 1628; that stretch reads VYGVAAGAFVLLIFIVSMIYL. The Cytoplasmic portion of the chain corresponds to 1629 to 1657; sequence ACKKPKKPQRRQNNRLKPLTLAYDGDADM.

Proteolytic cleavage in the extracellular region generates a 210 kDa soluble form. Post-translationally, extensively N-glycosylated. As to expression, detected on kidney podocytes along the glomerular capillary wall (at protein level).

It localises to the cell membrane. The protein resides in the cell projection. The protein localises to the secreted. Plays a role in actin cytoskeleton rearrangement. Functionally, the soluble form promotes endothelial cell migration and filopodia formation during sprouting angiogenesis via a FAK-dependent mechanism. The chain is Thrombospondin type-1 domain-containing protein 7A (THSD7A) from Homo sapiens (Human).